A 590-amino-acid chain; its full sequence is Aspartate--tRNA(Asp/Asn) ligase (590 aa).

L-aspartate is bound at residue Glu-176. Residues 200-203 (QLFK) are aspartate. Residues Arg-222 and His-451 each contribute to the L-aspartate site. 222–224 (RDE) provides a ligand contact to ATP. Glu-485 contacts ATP. Arg-492 is an L-aspartate binding site. An ATP-binding site is contributed by 537 to 540 (GIDR).

Belongs to the class-II aminoacyl-tRNA synthetase family. Type 1 subfamily. In terms of assembly, homodimer.

Its subcellular location is the cytoplasm. The enzyme catalyses tRNA(Asx) + L-aspartate + ATP = L-aspartyl-tRNA(Asx) + AMP + diphosphate. Functionally, aspartyl-tRNA synthetase with relaxed tRNA specificity since it is able to aspartylate not only its cognate tRNA(Asp) but also tRNA(Asn). Reaction proceeds in two steps: L-aspartate is first activated by ATP to form Asp-AMP and then transferred to the acceptor end of tRNA(Asp/Asn). The chain is Aspartate--tRNA(Asp/Asn) ligase from Ehrlichia ruminantium (strain Welgevonden).